The following is a 291-amino-acid chain: Probable cell wall amidase LytH (291 aa).

The signal sequence occupies residues M1–D40. Positions E41–N105 constitute an SH3b domain. The MurNAc-LAA domain maps to I122 to K286. The interval V123–N147 is disordered. The segment covering Q133–K142 has biased composition (polar residues).

The protein belongs to the N-acetylmuramoyl-L-alanine amidase 3 family.

It is found in the secreted. Probably involved in cell-wall metabolism. This chain is Probable cell wall amidase LytH (lytH), found in Staphylococcus epidermidis (strain ATCC 12228 / FDA PCI 1200).